A 247-amino-acid polypeptide reads, in one-letter code: 23S rRNA (guanosine-2'-O-)-methyltransferase RlmB (247 aa).

The S-adenosyl-L-methionine site is built by Gly-197, Ile-217, and Leu-226.

The protein belongs to the class IV-like SAM-binding methyltransferase superfamily. RNA methyltransferase TrmH family. RlmB subfamily.

Its subcellular location is the cytoplasm. It carries out the reaction guanosine(2251) in 23S rRNA + S-adenosyl-L-methionine = 2'-O-methylguanosine(2251) in 23S rRNA + S-adenosyl-L-homocysteine + H(+). Functionally, specifically methylates the ribose of guanosine 2251 in 23S rRNA. The polypeptide is 23S rRNA (guanosine-2'-O-)-methyltransferase RlmB (Vibrio vulnificus (strain CMCP6)).